The primary structure comprises 1846 residues: Insulin-like receptor (1846 aa).

N-linked (GlcNAc...) asparagine glycosylation is found at N113, N180, and N364. Intrachain disulfides connect C371–C386, C393–C401, C397–C410, C413–C422, and C426–C438. Residue N453 is glycosylated (N-linked (GlcNAc...) asparagine). Disulfide bonds link C469/C483 and C486/C490. A glycan (N-linked (GlcNAc...) asparagine) is linked at N518. C615 and C646 are joined by a disulfide. Residues N652, N671, and N696 are each glycosylated (N-linked (GlcNAc...) asparagine). Fibronectin type-III domains are found at residues 775-869 (TPDP…TMMG), 969-1067 (KPSS…LKRT), and 1077-1179 (LNET…TPGF). The segment at 944–980 (EKAENLGKAPKTLGGKKPLIHISKKKPSSSSTTSTPA) is disordered. The span at 961–970 (PLIHISKKKP) shows a compositional bias: basic residues. The Extracellular portion of the chain corresponds to 970–1183 (PSSSSTTSTP…VMTPGFFTVE (214 aa)). Over residues 971–980 (SSSSTTSTPA) the composition is skewed to low complexity. N1017, N1047, N1078, N1087, and N1093 each carry an N-linked (GlcNAc...) asparagine glycan. Residues 1184–1204 (IILGMLLVFLILMSIAGCIIY) traverse the membrane as a helical segment. Topologically, residues 1205-1846 (YYIQVRYGKK…IEDNEHHPLV (642 aa)) are cytoplasmic. The Protein kinase domain occupies 1246–1528 (VVLGQQCGEG…LLAAEASPEF (283 aa)). ATP contacts are provided by residues 1252 to 1260 (CGEGSFGKV) and K1282. The active-site Proton acceptor is the D1388. Disordered stretches follow at residues 1718–1742 (ISSM…TNWS) and 1769–1826 (QQQQ…IFNG). Over residues 1726-1742 (STGASSSSYGVPQTNWS) the composition is skewed to polar residues. Over residues 1808 to 1821 (YRNNGSPSRNGNSR) the composition is skewed to low complexity.

Belongs to the protein kinase superfamily. Tyr protein kinase family. Insulin receptor subfamily. In terms of assembly, tetramer of 2 alpha and 2 beta chains linked by disulfide bonds. The alpha chains contribute to the formation of the ligand-binding domain, while the beta chains carry the kinase domain. Interacts (via cytoplasmic domain) with shc-1 (PID domain). Interacts (via kinase domain) with daf-18 (via C-terminus). As to quaternary structure, interacts with casy-1; promoting axonal localization. The cofactor is Mg(2+).

It localises to the membrane. The protein localises to the cell projection. The protein resides in the axon. It catalyses the reaction L-tyrosyl-[protein] + ATP = O-phospho-L-tyrosyl-[protein] + ADP + H(+). Its activity is regulated as follows. Autophosphorylation activates the kinase activity. Interaction with shc-1 may inhibit its activity. Insulin receptor-like tyrosine kinase which regulates metabolism, controls longevity and prevents developmental arrest at the dauer stage. Binding of INS family members may either stimulate, or antagonize, association of the receptor with downstream mediators such as pdk-1 and age-1. Required for germline progenitor proliferation during larval development. Plays a role in maintaining gonad integrity in a daf-16/FOXO-dependent manner. Required for the response to environmental stimuli such as light, food, pheromone, and temperature. Negatively regulates resistance to UV and oxidative stress. In a daf-16/FOXO-dependent manner, plays a role in regulating the response to white light. Role in immune function and pathogen resistance. Negatively regulates autophagy. Regulates daf-18/PTEN protein levels. Plays a role in controlling seam cell development during the larval stages. Functionally, required for taste avoidance learning in the cell body of ASER gustatory neurons. In terms of biological role, required for taste avoidance learning in axons of ASER gustatory neurons. The polypeptide is Insulin-like receptor (Caenorhabditis elegans).